The sequence spans 243 residues: Adapter protein MecA (243 aa).

The segment at 119 to 140 is disordered; the sequence is NQVEDGQGIAHNPTKDTNDLDP.

This sequence belongs to the MecA family. In terms of assembly, homodimer.

Enables the recognition and targeting of unfolded and aggregated proteins to the ClpC protease or to other proteins involved in proteolysis. This chain is Adapter protein MecA, found in Lactiplantibacillus plantarum (strain ATCC BAA-793 / NCIMB 8826 / WCFS1) (Lactobacillus plantarum).